The primary structure comprises 258 residues: Acetylglutamate kinase (258 aa).

Substrate-binding positions include 44 to 45, Arg66, and Asn158; that span reads GG. Residues 181 to 186 and 209 to 211 each bind ATP; these read DVSGIL and IIT.

The protein belongs to the acetylglutamate kinase family. ArgB subfamily. As to quaternary structure, homodimer.

The protein resides in the cytoplasm. The catalysed reaction is N-acetyl-L-glutamate + ATP = N-acetyl-L-glutamyl 5-phosphate + ADP. It functions in the pathway amino-acid biosynthesis; L-arginine biosynthesis; N(2)-acetyl-L-ornithine from L-glutamate: step 2/4. Its function is as follows. Catalyzes the ATP-dependent phosphorylation of N-acetyl-L-glutamate. The polypeptide is Acetylglutamate kinase (Escherichia coli O157:H7).